The following is a 500-amino-acid chain: Tektin-like protein 1 (500 aa).

Residues 198–229 (MLTWEKEELKSMKRKMEADMEKSEALLKTLAS) are a coiled coil. Tyrosine 372 carries the post-translational modification Phosphotyrosine. Residues 420 to 444 (DKLQRHISHVEKNLDELLSMRKKLT) adopt a coiled-coil conformation.

Microtubule inner protein component of sperm flagellar doublet microtubules.

It is found in the cytoplasm. Its subcellular location is the cytoskeleton. It localises to the flagellum axoneme. Functionally, microtubule inner protein (MIP) part of the dynein-decorated doublet microtubules (DMTs) in sperm flagellar axoneme, which is required for motile flagellum beating. Forms an extensive interaction network cross-linking the lumen of axonemal doublet microtubules. This chain is Tektin-like protein 1, found in Bos taurus (Bovine).